The following is a 264-amino-acid chain: Thymidylate synthase 2 (264 aa).

Residue R21 participates in dUMP binding. H51 contacts (6R)-5,10-methylene-5,6,7,8-tetrahydrofolate. 126–127 (RR) is a binding site for dUMP. The active-site Nucleophile is the C146. DUMP contacts are provided by residues 166 to 169 (RSAD), N177, and 207 to 209 (HIY). D169 serves as a coordination point for (6R)-5,10-methylene-5,6,7,8-tetrahydrofolate. Residue S263 participates in (6R)-5,10-methylene-5,6,7,8-tetrahydrofolate binding.

It belongs to the thymidylate synthase family. Bacterial-type ThyA subfamily. As to quaternary structure, homodimer.

Its subcellular location is the cytoplasm. The enzyme catalyses dUMP + (6R)-5,10-methylene-5,6,7,8-tetrahydrofolate = 7,8-dihydrofolate + dTMP. Its pathway is pyrimidine metabolism; dTTP biosynthesis. Functionally, catalyzes the reductive methylation of 2'-deoxyuridine-5'-monophosphate (dUMP) to 2'-deoxythymidine-5'-monophosphate (dTMP) while utilizing 5,10-methylenetetrahydrofolate (mTHF) as the methyl donor and reductant in the reaction, yielding dihydrofolate (DHF) as a by-product. This enzymatic reaction provides an intracellular de novo source of dTMP, an essential precursor for DNA biosynthesis. The chain is Thymidylate synthase 2 from Bacillus subtilis (strain 168).